A 56-amino-acid polypeptide reads, in one-letter code: Protein SspF (56 aa).

This sequence belongs to the alpha/beta-type SASP family.

May play some important role in either sporulation or the dormant spore. The polypeptide is Protein SspF (sspF) (Priestia megaterium (strain ATCC 12872 / QMB1551) (Bacillus megaterium)).